The following is a 154-amino-acid chain: RING finger protein 11 (154 aa).

Polar residues predominate over residues 1-12 (MGNCLKSPTSDD). The interval 1–53 (MGNCLKSPTSDDISLLHESQSDRASFGEGTEPDQEPPPPYQEQVPVPVYHPTP) is disordered. Residue glycine 2 is the site of N-myristoyl glycine attachment. Cysteine 4 is lipidated: S-palmitoyl cysteine. Serine 14 and serine 25 each carry phosphoserine. The PPxY motif signature appears at 37–40 (PPPY). Residues 41 to 51 (QEQVPVPVYHP) are compositionally biased toward low complexity. An RING-type zinc finger spans residues 99-140 (CVICMMDFVYGDPIRFLPCMHIYHLDCIDDWLMRSFTCPSCM). At threonine 135 the chain carries Phosphothreonine; by PKB/AKT1.

In terms of assembly, interacts (when phosphorylated) with 14-3-3. Interacts with the E3 ubiquitin-ligases NEDD4, ITCH, SMURF2 and WWP1. Also interacts with the E2 ubiquitin-conjugating enzymes UBE2D1 and UBE2N, but neither with CDC34, nor with UBE2L3. Interacts with ZNF350, EPS15 and STAMBP. After TNF stimulation, interacts with TAX1BP1, TNFAIP3 and RIPK1; these interactions are transient and they are lost after 1 hour of stimulation with TNF. Interacts with GGA1. Post-translationally, ubiquitinated in the presence of ITCH, SMURF2 and UBE2D1, as well as WWP1. In terms of processing, phosphorylation by PKB/AKT1 may accelerate degradation by the proteasome. Acylation at both Gly-2 and Cys-4 is required for proper localization to the endosomes.

The protein resides in the early endosome. It localises to the recycling endosome. The protein localises to the cytoplasm. It is found in the nucleus. Essential component of a ubiquitin-editing protein complex, comprising also TNFAIP3, ITCH and TAX1BP1, that ensures the transient nature of inflammatory signaling pathways. Promotes the association of TNFAIP3 to RIPK1 after TNF stimulation. TNFAIP3 deubiquitinates 'Lys-63' polyubiquitin chains on RIPK1 and catalyzes the formation of 'Lys-48'-polyubiquitin chains. This leads to RIPK1 proteasomal degradation and consequently termination of the TNF- or LPS-mediated activation of NF-kappa-B. Recruits STAMBP to the E3 ubiquitin-ligase SMURF2 for ubiquitination, leading to its degradation by the 26S proteasome. The protein is RING finger protein 11 (RNF11) of Bos taurus (Bovine).